Here is a 358-residue protein sequence, read N- to C-terminus: Zinc-type alcohol dehydrogenase-like protein YogA (358 aa).

Belongs to the zinc-containing alcohol dehydrogenase family. Quinone oxidoreductase subfamily.

It functions in the pathway secondary metabolite biosynthesis. Zinc-type alcohol dehydrogenase-like protein; part of the gene cluster that mediates the biosynthesis of phomenoic acid, a long chain aliphatic carboxylic acid that does not appear to be essential for pathogenicity but may play a role in allowing to outcompete other fungi in the environmental niche via its antifungal properties. The polyketide synthase produces the long methylated aliphatic carboxylic acid chain of phomenoic acid. The cluster-specific cytochrome P450 monooxygenase may then hydroxylate the methyl group of carbon 31. The putative dehydrogenase YogA, which has no obvious role in phomenoic acid biosynthesis, may further modify phomenoic acid to produce a compound not identified yet. This Leptosphaeria maculans (strain JN3 / isolate v23.1.3 / race Av1-4-5-6-7-8) (Blackleg fungus) protein is Zinc-type alcohol dehydrogenase-like protein YogA.